Consider the following 367-residue polypeptide: Epoxide hydrolase 3 (367 aa).

The chain crosses the membrane as a helical span at residues 21-41 (GVFFWVLVYVAALLAAVSYIP). Asp173 serves as the catalytic Nucleophile. Tyr285 acts as the Proton donor in catalysis. His340 functions as the Proton acceptor in the catalytic mechanism.

It belongs to the AB hydrolase superfamily. Epoxide hydrolase family.

The protein localises to the microsome membrane. The enzyme catalyses an epoxide + H2O = an ethanediol. It carries out the reaction 9,10-epoxyoctadecanoate + H2O = 9,10-dihydroxyoctadecanoate. The catalysed reaction is 9,10-epoxy-(12Z)-octadecenoate + H2O = 9,10-dihydroxy-(12Z)-octadecenoate. It catalyses the reaction 8,9-epoxy-(5Z,11Z,14Z)-eicosatrienoate + H2O = 8,9-dihydroxy-(5Z,11Z,14Z)-eicosatrienoate. The enzyme catalyses 11,12-epoxy-(5Z,8Z,14Z)-eicosatrienoate + H2O = 11,12-dihydroxy-(5Z,8Z,14Z)-eicosatrienoate. It carries out the reaction 14,15-epoxy-(5Z,8Z,11Z)-eicosatrienoate + H2O = 14,15-dihydroxy-(5Z,8Z,11Z)-eicosatrienoate. Its activity is regulated as follows. Inhibited by 1-(1-acetylpiperidin-4-yl)-3-(4-(trifl uoromethoxy)phenyl)urea (TPAU), 1-cyclohexyl-3-dodecylurea (CDU), 12-(3-adamantan-1-yl-ureido)-dodecanoic acid (AUDA), 1-((3S, 5S, 7S)-adamantan-1-yl)-3-(5-(2-(2-ethoxyethoxy) ethoxy)pentyl)urea (AEPU) and to a lesser extent by 8-(3-((3S, 5S, 7S)-adamantan-1-yl)ureido) octanoic acid (AUOA). Catalyzes the hydrolysis of epoxide-containing fatty acids. Active in vitro against epoxyeicosatrienoic acids (EETs) including 8,9-EET, 9,10-EET, 11,12-EET and 14,15-EET and leukotoxin. This is Epoxide hydrolase 3 (ephx3) from Xenopus tropicalis (Western clawed frog).